Consider the following 189-residue polypeptide: Photosystem I assembly protein Ycf4 (189 aa).

2 helical membrane passes run 31-51 (TVIL…YFGF) and 70-90 (VMSF…LTII).

This sequence belongs to the Ycf4 family.

It localises to the plastid. The protein localises to the chloroplast thylakoid membrane. Its function is as follows. Seems to be required for the assembly of the photosystem I complex. The polypeptide is Photosystem I assembly protein Ycf4 (Chlorokybus atmophyticus (Soil alga)).